The primary structure comprises 133 residues: Small ribosomal subunit protein uS8 (133 aa).

It belongs to the universal ribosomal protein uS8 family. Part of the 30S ribosomal subunit. Contacts proteins S5 and S12.

Its function is as follows. One of the primary rRNA binding proteins, it binds directly to 16S rRNA central domain where it helps coordinate assembly of the platform of the 30S subunit. The polypeptide is Small ribosomal subunit protein uS8 (Prochlorococcus marinus subsp. pastoris (strain CCMP1986 / NIES-2087 / MED4)).